A 259-amino-acid chain; its full sequence is Type III pantothenate kinase (259 aa).

Position 6–13 (6–13 (DCGNTNTV)) interacts with ATP. 107–110 (GPDR) is a binding site for substrate. The active-site Proton acceptor is Asp109. Asp129 contacts K(+). Thr132 provides a ligand contact to ATP. Thr184 provides a ligand contact to substrate.

Belongs to the type III pantothenate kinase family. Homodimer. The cofactor is NH4(+). K(+) serves as cofactor.

The protein localises to the cytoplasm. The catalysed reaction is (R)-pantothenate + ATP = (R)-4'-phosphopantothenate + ADP + H(+). The protein operates within cofactor biosynthesis; coenzyme A biosynthesis; CoA from (R)-pantothenate: step 1/5. Its function is as follows. Catalyzes the phosphorylation of pantothenate (Pan), the first step in CoA biosynthesis. This Jannaschia sp. (strain CCS1) protein is Type III pantothenate kinase.